Reading from the N-terminus, the 180-residue chain is Adenine phosphoribosyltransferase (180 aa).

The protein belongs to the purine/pyrimidine phosphoribosyltransferase family. As to quaternary structure, homodimer.

It localises to the cytoplasm. It catalyses the reaction AMP + diphosphate = 5-phospho-alpha-D-ribose 1-diphosphate + adenine. It functions in the pathway purine metabolism; AMP biosynthesis via salvage pathway; AMP from adenine: step 1/1. Functionally, catalyzes a salvage reaction resulting in the formation of AMP, that is energically less costly than de novo synthesis. The chain is Adenine phosphoribosyltransferase from Marinobacter nauticus (strain ATCC 700491 / DSM 11845 / VT8) (Marinobacter aquaeolei).